Consider the following 241-residue polypeptide: Ribonuclease PH (241 aa).

Phosphate contacts are provided by residues Arg89 and 127–129 (GTR).

Belongs to the RNase PH family. In terms of assembly, homohexameric ring arranged as a trimer of dimers.

It catalyses the reaction tRNA(n+1) + phosphate = tRNA(n) + a ribonucleoside 5'-diphosphate. Its function is as follows. Phosphorolytic 3'-5' exoribonuclease that plays an important role in tRNA 3'-end maturation. Removes nucleotide residues following the 3'-CCA terminus of tRNAs; can also add nucleotides to the ends of RNA molecules by using nucleoside diphosphates as substrates, but this may not be physiologically important. Probably plays a role in initiation of 16S rRNA degradation (leading to ribosome degradation) during starvation. This is Ribonuclease PH from Xylella fastidiosa (strain 9a5c).